A 144-amino-acid chain; its full sequence is Protein D (144 aa).

The polypeptide is Protein D (D) (Escherichia coli).